The following is a 354-amino-acid chain: Uroporphyrinogen decarboxylase (354 aa).

Substrate is bound by residues 27-31, D77, Y153, T208, and H326; that span reads RQAGR.

The protein belongs to the uroporphyrinogen decarboxylase family. In terms of assembly, homodimer.

It localises to the cytoplasm. The catalysed reaction is uroporphyrinogen III + 4 H(+) = coproporphyrinogen III + 4 CO2. Its pathway is porphyrin-containing compound metabolism; protoporphyrin-IX biosynthesis; coproporphyrinogen-III from 5-aminolevulinate: step 4/4. Its function is as follows. Catalyzes the decarboxylation of four acetate groups of uroporphyrinogen-III to yield coproporphyrinogen-III. This Neisseria gonorrhoeae (strain ATCC 700825 / FA 1090) protein is Uroporphyrinogen decarboxylase.